The primary structure comprises 465 residues: MTPATKLPQDVGPIHFVGIGGIGMSGIAEVLLNLGYRVQGSDLKGSKITERLAGLGAEIFEGQRAENLDGAAVVVISSAIKPGNPELDGARAQGLPVVRRADMLAELMRLKSNIAIAGTHGKTTTTTMMAELMVAGGFDPTVINGGIIHAYSSNARMGQGEWMVVEADESDGSFNRLPATVAIVTNIDPEHMEHWGSIEALRQGFYDFVSNIPFYGIAVCCTDHAEVQALVGRITDRRVRTYGFNAQADVRATNLTYKGGVAHFDILLQHEDMVIEGCTLPMPGDHNVSNALSAVAVARHLGMKADEIRAALAAFGGVNRRFTKVGEVNGVTIIDDYGHHPVEIAAVLKAARQASEGRVIAVHQPHRYSRLSNLFDDFCACFNEADVVAIAEVYAAGEAPIPGADRDALVAGLIRHGHRHARAILSEEDLERLVREQTRPGDMVVCLGAGTISAWANGLPDRLKG.

118-124 (GTHGKTT) contacts ATP.

The protein belongs to the MurCDEF family.

It is found in the cytoplasm. The enzyme catalyses UDP-N-acetyl-alpha-D-muramate + L-alanine + ATP = UDP-N-acetyl-alpha-D-muramoyl-L-alanine + ADP + phosphate + H(+). The protein operates within cell wall biogenesis; peptidoglycan biosynthesis. In terms of biological role, cell wall formation. This Ruegeria pomeroyi (strain ATCC 700808 / DSM 15171 / DSS-3) (Silicibacter pomeroyi) protein is UDP-N-acetylmuramate--L-alanine ligase.